We begin with the raw amino-acid sequence, 217 residues long: 3,4-dihydroxy-2-butanone 4-phosphate synthase (217 aa).

D-ribulose 5-phosphate-binding positions include R37–E38, D42, R150–T154, and E174. A Mg(2+)-binding site is contributed by E38. H153 provides a ligand contact to Mg(2+).

This sequence belongs to the DHBP synthase family. As to quaternary structure, homodimer. It depends on Mg(2+) as a cofactor. The cofactor is Mn(2+).

The enzyme catalyses D-ribulose 5-phosphate = (2S)-2-hydroxy-3-oxobutyl phosphate + formate + H(+). Its pathway is cofactor biosynthesis; riboflavin biosynthesis; 2-hydroxy-3-oxobutyl phosphate from D-ribulose 5-phosphate: step 1/1. Catalyzes the conversion of D-ribulose 5-phosphate to formate and 3,4-dihydroxy-2-butanone 4-phosphate. This Shewanella sediminis (strain HAW-EB3) protein is 3,4-dihydroxy-2-butanone 4-phosphate synthase.